A 253-amino-acid polypeptide reads, in one-letter code: Imidazole glycerol phosphate synthase subunit HisF (253 aa).

Catalysis depends on residues D11 and D130.

It belongs to the HisA/HisF family. Heterodimer of HisH and HisF.

Its subcellular location is the cytoplasm. The catalysed reaction is 5-[(5-phospho-1-deoxy-D-ribulos-1-ylimino)methylamino]-1-(5-phospho-beta-D-ribosyl)imidazole-4-carboxamide + L-glutamine = D-erythro-1-(imidazol-4-yl)glycerol 3-phosphate + 5-amino-1-(5-phospho-beta-D-ribosyl)imidazole-4-carboxamide + L-glutamate + H(+). It functions in the pathway amino-acid biosynthesis; L-histidine biosynthesis; L-histidine from 5-phospho-alpha-D-ribose 1-diphosphate: step 5/9. Functionally, IGPS catalyzes the conversion of PRFAR and glutamine to IGP, AICAR and glutamate. The HisF subunit catalyzes the cyclization activity that produces IGP and AICAR from PRFAR using the ammonia provided by the HisH subunit. The polypeptide is Imidazole glycerol phosphate synthase subunit HisF (Clostridium botulinum (strain Alaska E43 / Type E3)).